Consider the following 827-residue polypeptide: Leucine--tRNA ligase (827 aa).

Positions 42–52 (PYPSGKLHMGH) match the 'HIGH' region motif. A 'KMSKS' region motif is present at residues 583-587 (KMSKS). Lys586 is an ATP binding site.

Belongs to the class-I aminoacyl-tRNA synthetase family.

The protein localises to the cytoplasm. The catalysed reaction is tRNA(Leu) + L-leucine + ATP = L-leucyl-tRNA(Leu) + AMP + diphosphate. The polypeptide is Leucine--tRNA ligase (Pelotomaculum thermopropionicum (strain DSM 13744 / JCM 10971 / SI)).